Here is a 128-residue protein sequence, read N- to C-terminus: Large ribosomal subunit protein uL22 (128 aa).

This sequence belongs to the universal ribosomal protein uL22 family. In terms of assembly, part of the 50S ribosomal subunit.

Its function is as follows. This protein binds specifically to 23S rRNA; its binding is stimulated by other ribosomal proteins, e.g. L4, L17, and L20. It is important during the early stages of 50S assembly. It makes multiple contacts with different domains of the 23S rRNA in the assembled 50S subunit and ribosome. Functionally, the globular domain of the protein is located near the polypeptide exit tunnel on the outside of the subunit, while an extended beta-hairpin is found that lines the wall of the exit tunnel in the center of the 70S ribosome. This is Large ribosomal subunit protein uL22 from Methylocella silvestris (strain DSM 15510 / CIP 108128 / LMG 27833 / NCIMB 13906 / BL2).